The chain runs to 192 residues: Ubiquitin-conjugating enzyme E2 1 (192 aa).

Residues 1-28 form a disordered region; the sequence is MTTPSRRRLMRDFKKLQEDPPAGVSGAP. Residues 4–150 enclose the UBC core domain; the sequence is PSRRRLMRDF…VQQIVEQSWL (147 aa). Cys88 acts as the Glycyl thioester intermediate in catalysis. The disordered stretch occupies residues 171-192; it reads AAPGANDADDDRMDEGASGSNA.

Belongs to the ubiquitin-conjugating enzyme family. Interacts with ubr-1 and rfp-1. Interacts with ubc-13.

The enzyme catalyses S-ubiquitinyl-[E1 ubiquitin-activating enzyme]-L-cysteine + [E2 ubiquitin-conjugating enzyme]-L-cysteine = [E1 ubiquitin-activating enzyme]-L-cysteine + S-ubiquitinyl-[E2 ubiquitin-conjugating enzyme]-L-cysteine.. The protein operates within protein modification; protein ubiquitination. In terms of biological role, catalyzes the covalent attachment of ubiquitin to other proteins. The polypeptide is Ubiquitin-conjugating enzyme E2 1 (ubc-1) (Caenorhabditis elegans).